Consider the following 376-residue polypeptide: UPF0754 membrane protein SE_1527 (376 aa).

A run of 2 helical transmembrane segments spans residues 4-24 and 356-376; these read ILLVVFMIILGAIIGGVTNMI and TLGFILGGIIGFFQGVIAIFV.

The protein belongs to the UPF0754 family.

The protein localises to the cell membrane. In Staphylococcus epidermidis (strain ATCC 12228 / FDA PCI 1200), this protein is UPF0754 membrane protein SE_1527.